A 187-amino-acid polypeptide reads, in one-letter code: GMP synthase [glutamine-hydrolyzing] subunit A (187 aa).

The Glutamine amidotransferase type-1 domain occupies 1-187; that stretch reads MILIIDNHGQ…KNFAKLCGEL (187 aa). The active-site Nucleophile is Cys76. Residues His164 and Glu166 contribute to the active site.

Heterodimer composed of a glutamine amidotransferase subunit (A) and a GMP-binding subunit (B).

It catalyses the reaction XMP + L-glutamine + ATP + H2O = GMP + L-glutamate + AMP + diphosphate + 2 H(+). It functions in the pathway purine metabolism; GMP biosynthesis; GMP from XMP (L-Gln route): step 1/1. Functionally, catalyzes the synthesis of GMP from XMP. This is GMP synthase [glutamine-hydrolyzing] subunit A from Methanopyrus kandleri (strain AV19 / DSM 6324 / JCM 9639 / NBRC 100938).